Reading from the N-terminus, the 538-residue chain is Probable ribonuclease 3 (538 aa).

RNase III domains are found at residues 24–149 (IKSY…LNFG) and 238–381 (ASQM…EGYL). The DRBM domain occupies 408–477 (LISQNIEVLH…NYKDLILQLY (70 aa)).

The protein belongs to the ribonuclease III family.

It carries out the reaction Endonucleolytic cleavage to 5'-phosphomonoester.. Digests double-stranded RNA. The chain is Probable ribonuclease 3 from Acanthamoeba polyphaga (Amoeba).